The primary structure comprises 738 residues: Nucleoprotein (738 aa).

A coiled-coil region spans residues 334–363; the sequence is VNVGEQYQQLREAATEAEKQLQQYAETREL. Residues 418-640 are disordered; sequence GDRYPDDNDI…QGSESEALPI (223 aa). Over residues 461–476 the composition is skewed to acidic residues; that stretch reads PYDDESNNYPDYEDSA. Positions 544 to 564 are enriched in polar residues; that stretch reads PGSNTNQPQGNMSSTLQSMTP. Residues 567–594 are compositionally biased toward acidic residues; the sequence is EESEPDDQKDDDDESLTSLDSEGDEDVE. Residues 616 to 625 show a composition bias toward polar residues; sequence VDTNQQNGPS.

The protein belongs to the filoviruses nucleoprotein family. Homooligomer. Homomultimerizes to form the nucleocapsid. Binds to viral genomic RNA. Interacts with VP35 and VP30 to form the nucleocapsid. Interacts with host PPP2R5C; this interaction leads to VP30 dephosphorylation and viral transcription. Interacts with VP24; this interaction facilitates nucleocapsid assembly and genome packaging. Interacts with matrix protein VP40; this interaction allows recruitment of the nucleocapsid into progeny virions. Interacts with host STAU1. Interacts with host NXF1 (via RNA-binding domain); this interaction recruits NXF1 to the inclusion bodies were viral replication takes place, probably to export viral mRNA-NXF1 complexes from these sites. Interacts with host CCDC92; this interaction sequesters NP in the host cytoplasm. Interacts with host TRIM14. Post-translationally, phosphorylated and O-glycosylated by host. Acetylated by host EP300 in vitro.

Its subcellular location is the virion. It is found in the host cytoplasm. In terms of biological role, oligomerizes into helical capsid to encapsidate the viral genome, protecting it from nucleases and the cellular innate immune response. VP35 binds to and stabilizes monomeric NP, keeping it soluble. Upon virus replication, NP is recruited to bind cooperatively viral genomic RNA and VP35 is released. The encapsidated genomic RNA is termed the nucleocapsid and serves as template for transcription and replication. The nucleocapsid is helical with a pitch of 10.81 NP per turn and a diameter of about 22nm. Each NP binds to six nucleotides of viral genomic RNA, three being exposed to the solvant and three hidden into the nucleocapsid. Also recruits host PPP2R5C phosphatase to dephosphorylate VP30 and thereby promote viral transcription. Upon virion assembly and budding, NP binds to VP24 and possibly host STAU1. In Sudan ebolavirus (strain Human/Uganda/Gulu/2000) (SEBOV), this protein is Nucleoprotein (NP).